Here is a 576-residue protein sequence, read N- to C-terminus: MNIFLDIFSFILFFGILTIISPILGKYMADIYEGRVHPSLKPIRYVEKTIYKILGIDESKEMNWKEYLYALLSFNFLGFLVLFLTLLFQKYLPLNQYHIPNMSWDLAFNTAVSFVTNTNWQAYAGETQATYFSQITGLALQNFLSAASGIVVALVLIRAFARKNTIYLGNFYVDFTRTILYVLLPVAFFSALFLVSQGVIQNFSHYKTIELLEPYKDSKNIITTQTLPMGPVASQEAIKLLGTNGGGFFNANSAHPFENPTPLSNVFEAFLIILIPASLVFTFGYMIKDKRQGWFLYSVMLFVLMLFMGIQYYFEWFGNPIVKKLGIEGPYLIGKELRFGIGGTVLFSSITTATSCGAVNSMLDSFTPLGGLVPMSLISLGEIIFGGVGSGLYGMIAMVIIAVFVAGLMIGRTPEYLNKKIESREMWSSVVITLVSGITALLLTTLALYTKWGLSSMSNPGPHGLSEVLYAYISTSNNSGSAFAGLNANTVFYNITTGLAMLIGRFIPIIAVFYMASSLSLKKHVPPSPGTLPTHTLVFGVWLVFIIIVVGALTFLPAFSLGPILEHMLMLEGVTL.

12 helical membrane-spanning segments follow: residues 3–23 (IFLD…ISPI), 68–88 (LYAL…TLLF), 137–157 (GLAL…LVLI), 179–199 (ILYV…SQGV), 267–287 (FEAF…GYMI), 294–314 (WFLY…QYYF), 339–359 (FGIG…CGAV), 369–389 (LGGL…GGVG), 391–411 (GLYG…LMIG), 430–450 (VVIT…ALYT), 495–515 (ITTG…VFYM), and 537–557 (LVFG…TFLP).

It belongs to the KdpA family. In terms of assembly, the system is composed of three essential subunits: KdpA, KdpB and KdpC.

Its subcellular location is the cell inner membrane. Functionally, part of the high-affinity ATP-driven potassium transport (or Kdp) system, which catalyzes the hydrolysis of ATP coupled with the electrogenic transport of potassium into the cytoplasm. This subunit binds the periplasmic potassium ions and delivers the ions to the membrane domain of KdpB through an intramembrane tunnel. In Hydrogenobaculum sp. (strain Y04AAS1), this protein is Potassium-transporting ATPase potassium-binding subunit.